The primary structure comprises 133 residues: Cytochrome c-type biogenesis protein CcmE (133 aa).

The Cytoplasmic portion of the chain corresponds to 1–7 (MKRKHKR). Residues 8-28 (LLFIIVTFIIFGSSVVIVLNK) form a helical; Signal-anchor for type II membrane protein membrane-spanning segment. The Periplasmic segment spans residues 29–133 (LRSNISFFFT…NYKPGKYRAK (105 aa)). Residues H121 and Y125 each contribute to the heme site.

Belongs to the CcmE/CycJ family.

The protein localises to the cell inner membrane. Its function is as follows. Heme chaperone required for the biogenesis of c-type cytochromes. Transiently binds heme delivered by CcmC and transfers the heme to apo-cytochromes in a process facilitated by CcmF and CcmH. This is Cytochrome c-type biogenesis protein CcmE from Ehrlichia canis (strain Jake).